The sequence spans 131 residues: Small ribosomal subunit protein uS8 (131 aa).

Belongs to the universal ribosomal protein uS8 family. In terms of assembly, part of the 30S ribosomal subunit. Contacts proteins S5 and S12.

Functionally, one of the primary rRNA binding proteins, it binds directly to 16S rRNA central domain where it helps coordinate assembly of the platform of the 30S subunit. The polypeptide is Small ribosomal subunit protein uS8 (Sorangium cellulosum (strain So ce56) (Polyangium cellulosum (strain So ce56))).